A 415-amino-acid chain; its full sequence is Packaging protein 3 (415 aa).

2 disordered regions span residues methionine 1–alanine 56 and glutamate 66–lysine 85. The interaction with packaging protein 1 stretch occupies residues methionine 1–serine 173. Residues proline 31–aspartate 46 show a composition bias toward low complexity. Residue serine 75 is modified to Phosphoserine; by host. Basic and acidic residues predominate over residues proline 76–lysine 85. At serine 360 the chain carries Phosphoserine; by host. Residues glycine 381–glycine 394 show a composition bias toward low complexity. The interval glycine 381–tyrosine 415 is disordered. A compositionally biased stretch (acidic residues) spans glutamate 400–tyrosine 415.

The protein belongs to the adenoviridae packaging protein 3 family. Part of the genome packaging complex composed of packaging proteins 1, 2 and 3; this complex specifically binds to the packaging sequence on the left end of viral genomic DNA and performs packaging of the viral genome. Interacts with hexon-linking protein IIIa; this interaction is required to promote correct genome packaging. Cleaved at different sites by the viral protease during virion maturation.

Its subcellular location is the host nucleus. In terms of biological role, involved in viral genome packaging through its interaction with packaging proteins 1 and 2. After proteolytic cleavage by adenovirus protease, L1 52/55k protein is removed from the capsid during viral maturation. The chain is Packaging protein 3 from Human adenovirus C serotype 2 (HAdV-2).